Reading from the N-terminus, the 345-residue chain is MVNSFEKSRFLLVKKLLEGEPLTPGEAAQLAQAMLDPSFDNSLKAAALAALRVRGEQPGEVVGFARALRDRAVRVEYGGEVLLDTAGTGGDGLSTLNASTAAALVAASLGVPTAKHGNRSFSSKSGSADVMEMLGYNINHRADRAVRMLSTLGFTFLYAPNYHPAMKAVVPVRRKLATRTIFNLVGPLANPAFNNVQVIGVARRSLMPVIASAASLLGYDAVLVVHGDPGMDEVSVTGETKILEVRRGRIEEYSITPEDLGLPITGLKELRVANAVESAERVRRALSGRGRRSDEAFIAANAAAALYVAGFEKDLKGAAEAAVQAIREGRPAALLEKAVKASLGM.

Residues G87, 90–91 (GD), T95, 97–100 (NAST), 115–123 (KHGNRSFSS), and S127 each bind 5-phospho-alpha-D-ribose 1-diphosphate. G87 provides a ligand contact to anthranilate. Mg(2+) is bound at residue S99. An anthranilate-binding site is contributed by N118. R173 contributes to the anthranilate binding site. Mg(2+) is bound by residues D232 and E233.

The protein belongs to the anthranilate phosphoribosyltransferase family. Homodimer. The cofactor is Mg(2+).

It carries out the reaction N-(5-phospho-beta-D-ribosyl)anthranilate + diphosphate = 5-phospho-alpha-D-ribose 1-diphosphate + anthranilate. Its pathway is amino-acid biosynthesis; L-tryptophan biosynthesis; L-tryptophan from chorismate: step 2/5. Functionally, catalyzes the transfer of the phosphoribosyl group of 5-phosphorylribose-1-pyrophosphate (PRPP) to anthranilate to yield N-(5'-phosphoribosyl)-anthranilate (PRA). This Aeropyrum pernix (strain ATCC 700893 / DSM 11879 / JCM 9820 / NBRC 100138 / K1) protein is Anthranilate phosphoribosyltransferase.